The following is a 760-amino-acid chain: Rho GTPase-activating protein 26 (760 aa).

The BAR domain occupies 7-262 (EFSECCLDSP…MKENPHEHKN (256 aa)). The PH domain occupies 265 to 369 (PYTMEGYLYV…WMEAMDGREP (105 aa)). Residues 383 to 568 (AQLDSIGFSI…ILIENHEKIF (186 aa)) form the Rho-GAP domain. Disordered stretches follow at residues 571–617 (VPET…ESRN) and 658–701 (PNRP…SPIS). Polar residues predominate over residues 605–617 (HTAQPNEKQESRN). Positions 674–701 (LSPSWPMFSAPSSPMPTSSTSSDSSPIS) are enriched in low complexity. One can recognise an SH3 domain in the interval 702–760 (SPLRKARALYACKAEHDSELSFTAGTVFDNVHPSQEPGWLEGTLNGKTGLIPENYVEFL).

As to quaternary structure, binds to the C-terminus of PTK2/FAK1. In terms of tissue distribution, detected in embryonic brain and liver, and at low levels in embryonic eye, heart, lung, intestine and skeletal muscle.

It is found in the cell junction. The protein localises to the focal adhesion. Its subcellular location is the cytoplasm. The protein resides in the cytoskeleton. It localises to the endosome membrane. In terms of biological role, GTPase-activating protein for RHOA and CDC42. May be involved in the regulation of neosynthesized protein export through a Rab-endososomal dependent export route. The protein is Rho GTPase-activating protein 26 (ARHGAP26) of Gallus gallus (Chicken).